Reading from the N-terminus, the 60-residue chain is MAKKLEITLTRSVIGRPQDQRATVEALGLKKLNSTVVKEETPAILGMINKVSHLLTVKEA.

It belongs to the universal ribosomal protein uL30 family. In terms of assembly, part of the 50S ribosomal subunit.

In Bacillus cereus (strain G9842), this protein is Large ribosomal subunit protein uL30.